Reading from the N-terminus, the 95-residue chain is Aspartyl/glutamyl-tRNA(Asn/Gln) amidotransferase subunit C (95 aa).

Belongs to the GatC family. In terms of assembly, heterotrimer of A, B and C subunits.

It catalyses the reaction L-glutamyl-tRNA(Gln) + L-glutamine + ATP + H2O = L-glutaminyl-tRNA(Gln) + L-glutamate + ADP + phosphate + H(+). It carries out the reaction L-aspartyl-tRNA(Asn) + L-glutamine + ATP + H2O = L-asparaginyl-tRNA(Asn) + L-glutamate + ADP + phosphate + 2 H(+). Its function is as follows. Allows the formation of correctly charged Asn-tRNA(Asn) or Gln-tRNA(Gln) through the transamidation of misacylated Asp-tRNA(Asn) or Glu-tRNA(Gln) in organisms which lack either or both of asparaginyl-tRNA or glutaminyl-tRNA synthetases. The reaction takes place in the presence of glutamine and ATP through an activated phospho-Asp-tRNA(Asn) or phospho-Glu-tRNA(Gln). This is Aspartyl/glutamyl-tRNA(Asn/Gln) amidotransferase subunit C from Hydrogenovibrio crunogenus (strain DSM 25203 / XCL-2) (Thiomicrospira crunogena).